Here is a 290-residue protein sequence, read N- to C-terminus: Xyloglucan endotransglucosylase/hydrolase protein 3 (290 aa).

The N-terminal stretch at 1 to 21 is a signal peptide; the sequence is MDYMRIFSVFVVTLWIIRVDA. The 199-residue stretch at 22–220 folds into the GH16 domain; that stretch reads RVFGGRGIEK…WSYSPFIAHF (199 aa). E109 (nucleophile) is an active-site residue. E113 (proton donor) is an active-site residue. Xyloglucan-binding positions include E113, 126 to 128, 136 to 138, 199 to 200, and G204; these read QTN, NRE, and DW. The N-linked (GlcNAc...) asparagine glycan is linked to N210. 2 disulfide bridges follow: C228–C240 and C276–C289.

The protein belongs to the glycosyl hydrolase 16 family. XTH group 1 subfamily. In terms of processing, contains at least one intrachain disulfide bond essential for its enzymatic activity. In terms of tissue distribution, predominantly expressed in flower buds.

The protein localises to the secreted. The protein resides in the cell wall. It is found in the extracellular space. Its subcellular location is the apoplast. The enzyme catalyses breaks a beta-(1-&gt;4) bond in the backbone of a xyloglucan and transfers the xyloglucanyl segment on to O-4 of the non-reducing terminal glucose residue of an acceptor, which can be a xyloglucan or an oligosaccharide of xyloglucan.. Its function is as follows. Catalyzes xyloglucan endohydrolysis (XEH) and/or endotransglycosylation (XET). Cleaves and religates xyloglucan polymers, an essential constituent of the primary cell wall, and thereby participates in cell wall construction of growing tissues. The polypeptide is Xyloglucan endotransglucosylase/hydrolase protein 3 (XTH3) (Arabidopsis thaliana (Mouse-ear cress)).